The chain runs to 242 residues: DNA repair protein RecO (242 aa).

This sequence belongs to the RecO family.

Its function is as follows. Involved in DNA repair and RecF pathway recombination. This is DNA repair protein RecO from Laribacter hongkongensis (strain HLHK9).